The following is a 795-amino-acid chain: Inactive N-acetylated-alpha-linked acidic dipeptidase-like protein 2 (795 aa).

Residues 1-38 (MGENEASLPNTSLQGKKMAYQKVHADQRAPGHSQYLDN) form a disordered region. Residues 1-121 (MGENEASLPN…RSAPKSNRCN (121 aa)) lie on the Cytoplasmic side of the membrane. S92 is subject to Phosphoserine. Residues 122 to 142 (FCHVLKILCTATILFIFGILI) form a helical; Signal-anchor for type II membrane protein membrane-spanning segment. At 143-795 (GYYVHTNCPS…VFKSVLDGKN (653 aa)) the chain is on the extracellular side. N295, N373, N534, and N759 each carry an N-linked (GlcNAc...) asparagine glycan.

Belongs to the peptidase M28 family. M28B subfamily. Expressed at higher level in kidney and placenta. In embryo, it is mainly confined to duodenal and stomach endoderm, mesonephros, metanephros and pancreas.

The protein localises to the membrane. In terms of biological role, may be catalytically inactive. The sequence is that of Inactive N-acetylated-alpha-linked acidic dipeptidase-like protein 2 (NAALADL2) from Homo sapiens (Human).